The chain runs to 317 residues: Transaldolase (317 aa).

The active-site Schiff-base intermediate with substrate is K126.

It belongs to the transaldolase family. Type 1 subfamily. In terms of assembly, homodimer.

The protein resides in the cytoplasm. The catalysed reaction is D-sedoheptulose 7-phosphate + D-glyceraldehyde 3-phosphate = D-erythrose 4-phosphate + beta-D-fructose 6-phosphate. The protein operates within carbohydrate degradation; pentose phosphate pathway; D-glyceraldehyde 3-phosphate and beta-D-fructose 6-phosphate from D-ribose 5-phosphate and D-xylulose 5-phosphate (non-oxidative stage): step 2/3. Functionally, transaldolase is important for the balance of metabolites in the pentose-phosphate pathway. In Burkholderia mallei (strain SAVP1), this protein is Transaldolase.